The following is a 134-amino-acid chain: Large ribosomal subunit protein bL12 (134 aa).

The protein belongs to the bacterial ribosomal protein bL12 family. As to quaternary structure, homodimer. Part of the ribosomal stalk of the 50S ribosomal subunit. Forms a multimeric L10(L12)X complex, where L10 forms an elongated spine to which 2 to 4 L12 dimers bind in a sequential fashion. Binds GTP-bound translation factors.

Forms part of the ribosomal stalk which helps the ribosome interact with GTP-bound translation factors. Is thus essential for accurate translation. This Anaplasma phagocytophilum (strain HZ) protein is Large ribosomal subunit protein bL12.